A 380-amino-acid chain; its full sequence is O-phospho-L-seryl-tRNA:Cys-tRNA synthase (380 aa).

Pyridoxal 5'-phosphate is bound by residues 86-87 (AR), asparagine 192, and 215-217 (SGH). Lysine 218 is subject to N6-(pyridoxal phosphate)lysine.

It belongs to the SepCysS family. In terms of assembly, homodimer. Interacts with SepRS. Pyridoxal 5'-phosphate is required as a cofactor.

The catalysed reaction is O-phospho-L-seryl-tRNA(Cys) + hydrogen sulfide + H(+) = L-cysteinyl-tRNA(Cys) + phosphate. In terms of biological role, converts O-phospho-L-seryl-tRNA(Cys) (Sep-tRNA(Cys)) to L-cysteinyl-tRNA(Cys) (Cys-tRNA(Cys)). This is O-phospho-L-seryl-tRNA:Cys-tRNA synthase from Methanococcus maripaludis (strain C5 / ATCC BAA-1333).